We begin with the raw amino-acid sequence, 556 residues long: Probable Xaa-Pro aminopeptidase SS1G_06948 (556 aa).

The Mn(2+) site is built by aspartate 305, aspartate 316, glutamate 460, and glutamate 501.

Belongs to the peptidase M24B family. It depends on Mn(2+) as a cofactor.

The catalysed reaction is Release of any N-terminal amino acid, including proline, that is linked to proline, even from a dipeptide or tripeptide.. In terms of biological role, catalyzes the removal of a penultimate prolyl residue from the N-termini of peptides. The sequence is that of Probable Xaa-Pro aminopeptidase SS1G_06948 from Sclerotinia sclerotiorum (strain ATCC 18683 / 1980 / Ss-1) (White mold).